The sequence spans 326 residues: Regulation of nuclear pre-mRNA domain-containing protein 1B (326 aa).

Ser-2 is subject to N-acetylserine. A CID domain is found at 2-133 (SSFSESALEK…QLKLSMEDSK (132 aa)). Residues 128–144 (SMEDSKSPPPKAAEEKK) are compositionally biased toward basic and acidic residues. The disordered stretch occupies residues 128–148 (SMEDSKSPPPKAAEEKKSLKR). Ser-132 and Ser-134 each carry phosphoserine. Residue Tyr-161 is modified to Phosphotyrosine. 2 positions are modified to phosphoserine: Ser-166 and Ser-299.

This sequence belongs to the UPF0400 (RTT103) family. As to quaternary structure, homodimer. May form a heterodimer with RPRD1A. Associates with RPAP2. Associates with the RNA polymerase II complex. As to expression, widely expressed in the adult with highest levels in liver, colon, prostate and uterus and lowest levels in heart and kidney. Not detected in rectum.

The protein localises to the nucleus. Interacts with phosphorylated C-terminal heptapeptide repeat domain (CTD) of the largest RNA polymerase II subunit POLR2A, and participates in dephosphorylation of the CTD by RPAP2. Transcriptional regulator which enhances expression of CCND1. Promotes binding of RNA polymerase II to the CCDN1 promoter and to the termination region before the poly-A site but decreases its binding after the poly-A site. Prevents RNA polymerase II from reading through the 3' end termination site and may allow it to be recruited back to the promoter through promotion of the formation of a chromatin loop. Also enhances the transcription of a number of other cell cycle-related genes including CDK2, CDK4, CDK6 and cyclin-E but not CDKN1A, CDKN1B or cyclin-A. Promotes cell proliferation. The protein is Regulation of nuclear pre-mRNA domain-containing protein 1B (Rprd1b) of Mus musculus (Mouse).